An 86-amino-acid chain; its full sequence is Centromere protein W (86 aa).

The protein belongs to the CENP-W/WIP1 family. Heterodimer with CENPT; this dimer coassembles with CENPS-CENPX heterodimers at centromeres to form the tetrameric CENP-T-W-S-X complex, which is a subcomplex of the large constitutive centromere-associated network (CCAN, also known as the interphase centromere complex or ICEN). Interacts with NPM1.

The protein resides in the nucleus. The protein localises to the chromosome. It localises to the centromere. Its subcellular location is the kinetochore. It is found in the nucleus matrix. The protein resides in the nucleolus. Its function is as follows. Component of the CENPA-NAC (nucleosome-associated) complex, a complex that plays a central role in assembly of kinetochore proteins, mitotic progression and chromosome segregation. The CENPA-NAC complex recruits the CENPA-CAD (nucleosome distal) complex and may be involved in incorporation of newly synthesized CENPA into centromeres. Part of a nucleosome-associated complex that binds specifically to histone H3-containing nucleosomes at the centromere, as opposed to nucleosomes containing CENPA. Component of the heterotetrameric CENP-T-W-S-X complex that binds and supercoils DNA, and plays an important role in kinetochore assembly. CENPW has a fundamental role in kinetochore assembly and function. It is one of the inner kinetochore proteins, with most further proteins binding downstream. Required for normal chromosome organization and normal progress through mitosis. In Rattus norvegicus (Rat), this protein is Centromere protein W (Cenpw).